The sequence spans 315 residues: Malate dehydrogenase (315 aa).

9–15 (GGSGNVG) lines the NAD(+) pocket. Substrate is bound by residues R84 and R90. Residues N97 and 120–122 (VSN) each bind NAD(+). N122 and R153 together coordinate substrate. Catalysis depends on H177, which acts as the Proton acceptor.

Belongs to the LDH/MDH superfamily.

It carries out the reaction (S)-malate + NAD(+) = oxaloacetate + NADH + H(+). Catalyzes the reversible oxidation of malate to oxaloacetate. This Helicobacter hepaticus (strain ATCC 51449 / 3B1) protein is Malate dehydrogenase.